A 120-amino-acid polypeptide reads, in one-letter code: uncharacterized protein (120 aa).

The helical transmembrane segment at 19 to 41 (YPELFITWCVMTYTFGVAGYMLG) threads the bilayer. Residues 57-78 (SKNAHPWEDTKSSSGKSDESLD) form a disordered region. Over residues 61–75 (HPWEDTKSSSGKSDE) the composition is skewed to basic and acidic residues.

It localises to the membrane. This is an uncharacterized protein from Schizosaccharomyces pombe (strain 972 / ATCC 24843) (Fission yeast).